The primary structure comprises 569 residues: Phospholipase B-like protein D (569 aa).

Residues 1–22 form the signal peptide; sequence MIIFKNLLKLLIILLTIKLYFC. N-linked (GlcNAc...) asparagine glycosylation is found at Asn-93, Asn-126, Asn-181, Asn-425, and Asn-430.

The protein belongs to the phospholipase B-like family.

The protein resides in the secreted. Its function is as follows. Probable phospholipase. The protein is Phospholipase B-like protein D (plbD) of Dictyostelium discoideum (Social amoeba).